The following is a 181-amino-acid chain: Ribulose bisphosphate carboxylase small subunit, chloroplastic 6 (181 aa).

Residues 1 to 57 constitute a chloroplast transit peptide; the sequence is MASSIVSSAAVATRSNVAQASMVAPFTGLKSAASFPVTKKNNNVDITSLASNGGRVR.

This sequence belongs to the RuBisCO small chain family. In terms of assembly, heterohexadecamer of 8 large and 8 small subunits.

Its subcellular location is the plastid. The protein localises to the chloroplast. Functionally, ruBisCO catalyzes two reactions: the carboxylation of D-ribulose 1,5-bisphosphate, the primary event in carbon dioxide fixation, as well as the oxidative fragmentation of the pentose substrate. Both reactions occur simultaneously and in competition at the same active site. Although the small subunit is not catalytic it is essential for maximal activity. The sequence is that of Ribulose bisphosphate carboxylase small subunit, chloroplastic 6 from Solanum tuberosum (Potato).